The following is a 1208-amino-acid chain: Putative protease AXL1 (1208 aa).

H68 is a Zn(2+) binding site. E71 acts as the Proton acceptor in catalysis. H72 and E156 together coordinate Zn(2+). At S262 the chain carries Phosphoserine.

The protein belongs to the peptidase M16 family. Interacts with BUD5. Requires Zn(2+) as cofactor.

The protein resides in the bud neck. In terms of biological role, probable protease. Involved in axial budding. In Saccharomyces cerevisiae (strain ATCC 204508 / S288c) (Baker's yeast), this protein is Putative protease AXL1 (AXL1).